Consider the following 256-residue polypeptide: Hydroxyethylthiazole kinase (256 aa).

M38 serves as a coordination point for substrate. R114 and T159 together coordinate ATP. Residue G186 coordinates substrate.

The protein belongs to the Thz kinase family. Requires Mg(2+) as cofactor.

It catalyses the reaction 5-(2-hydroxyethyl)-4-methylthiazole + ATP = 4-methyl-5-(2-phosphooxyethyl)-thiazole + ADP + H(+). Its pathway is cofactor biosynthesis; thiamine diphosphate biosynthesis; 4-methyl-5-(2-phosphoethyl)-thiazole from 5-(2-hydroxyethyl)-4-methylthiazole: step 1/1. Functionally, catalyzes the phosphorylation of the hydroxyl group of 4-methyl-5-beta-hydroxyethylthiazole (THZ). This Streptococcus agalactiae serotype III (strain NEM316) protein is Hydroxyethylthiazole kinase.